A 405-amino-acid polypeptide reads, in one-letter code: Acetate kinase (405 aa).

Residue Asn7 participates in Mg(2+) binding. Lys14 provides a ligand contact to ATP. Arg90 lines the substrate pocket. The Proton donor/acceptor role is filled by Asp147. ATP-binding positions include 207–211 (HLGNG), 282–284 (DMR), and 330–334 (GVGEN). Glu383 provides a ligand contact to Mg(2+).

The protein belongs to the acetokinase family. As to quaternary structure, homodimer. Requires Mg(2+) as cofactor. Mn(2+) is required as a cofactor.

It is found in the cytoplasm. It catalyses the reaction acetate + ATP = acetyl phosphate + ADP. Its pathway is metabolic intermediate biosynthesis; acetyl-CoA biosynthesis; acetyl-CoA from acetate: step 1/2. Catalyzes the formation of acetyl phosphate from acetate and ATP. Can also catalyze the reverse reaction. The polypeptide is Acetate kinase (Pseudothermotoga lettingae (strain ATCC BAA-301 / DSM 14385 / NBRC 107922 / TMO) (Thermotoga lettingae)).